Consider the following 834-residue polypeptide: Unextended protein (834 aa).

The N-terminal stretch at 1–20 (MNTYFISFITIIIFANGING) is a signal peptide. Over 21-182 (TSVDTSNKLL…DFLKIKTFEP (162 aa)) the chain is Extracellular. N-linked (GlcNAc...) asparagine glycosylation is found at N38, N42, and N156. The region spanning 182-361 (PLIPVWLAII…NDVNDLDKNE (180 aa)) is the CNNM transmembrane domain. A helical transmembrane segment spans residues 183–203 (LIPVWLAIIIIVTCLGFSALF). Topologically, residues 204–244 (SGLNLGLMSMDRTELKILRNTGTEKEKKYASKIAPVRDQGN) are cytoplasmic. The chain crosses the membrane as a helical span at residues 245-265 (YLLCSILLGNVLVNSTFTILL). At 266–267 (DG) the chain is on the extracellular side. The helical transmembrane segment at 268 to 288 (LTSGLFAVIFSTLAIVLFGEI) threads the bilayer. Residues 289–298 (TPQAVCSRHG) lie on the Cytoplasmic side of the membrane. A helical transmembrane segment spans residues 299-319 (LAIGAKTILVTKTVMAITAPL). The Extracellular portion of the chain corresponds to 320-834 (SYPVSRILDK…DKFESKQSKP (515 aa)). CBS domains follow at residues 380–441 (MTHI…NTPL) and 448–515 (YQNP…IVDE). A glycan (N-linked (GlcNAc...) asparagine) is linked at N522. Position 604-656 (604-656 (YIFTQGKAVDFFVLILEGRVEVTIGKEALMFESGPFTYFGTQALVPNVVIDSP)) interacts with a nucleoside 3',5'-cyclic phosphate. The disordered stretch occupies residues 739–765 (CFAQNQSTRRLSNRSINSSPTNMNRSP). Positions 740 to 763 (FAQNQSTRRLSNRSINSSPTNMNR) are enriched in polar residues. 3 N-linked (GlcNAc...) asparagine glycosylation sites follow: N743, N751, and N790. Residues 807-834 (SGEQDTTAASMPLLPKLDDKFESKQSKP) form a disordered region. The segment covering 822 to 834 (KLDDKFESKQSKP) has biased composition (basic and acidic residues).

This sequence belongs to the ACDP family. Interacts with PRL-1, possibly at the plasma membrane.

The protein localises to the cell membrane. Functionally, probable metal transporter. Acts downstream of PRL-1 and protects the nervous system against olfactory carbon dioxide stimulation. This Drosophila melanogaster (Fruit fly) protein is Unextended protein.